Here is a 532-residue protein sequence, read N- to C-terminus: 2,3-bisphosphoglycerate-independent phosphoglycerate mutase (532 aa).

Mn(2+) is bound by residues Asp-15 and Ser-65. The active-site Phosphoserine intermediate is the Ser-65. Substrate contacts are provided by residues His-126, 156 to 157, Arg-188, Arg-194, 258 to 261, and Lys-331; these read RD and RPDR. Positions 398, 402, 439, 440, and 457 each coordinate Mn(2+).

The protein belongs to the BPG-independent phosphoglycerate mutase family. In terms of assembly, monomer. It depends on Mn(2+) as a cofactor.

It carries out the reaction (2R)-2-phosphoglycerate = (2R)-3-phosphoglycerate. The protein operates within carbohydrate degradation; glycolysis; pyruvate from D-glyceraldehyde 3-phosphate: step 3/5. Its function is as follows. Catalyzes the interconversion of 2-phosphoglycerate and 3-phosphoglycerate. The protein is 2,3-bisphosphoglycerate-independent phosphoglycerate mutase of Microcystis aeruginosa (strain NIES-843 / IAM M-2473).